The primary structure comprises 158 residues: Small ribosomal subunit protein uS7 (158 aa).

It belongs to the universal ribosomal protein uS7 family. As to quaternary structure, part of the 30S ribosomal subunit. Contacts proteins S9 and S11.

In terms of biological role, one of the primary rRNA binding proteins, it binds directly to 16S rRNA where it nucleates assembly of the head domain of the 30S subunit. Is located at the subunit interface close to the decoding center, probably blocks exit of the E-site tRNA. This chain is Small ribosomal subunit protein uS7, found in Bacteroides fragilis (strain YCH46).